The following is a 221-amino-acid chain: Catechol O-methyltransferase (221 aa).

S-adenosyl-L-methionine contacts are provided by Val-41, Gly-65, Leu-67, Ser-71, Glu-89, His-94, Ala-118, and Asp-139. Mg(2+) is bound by residues Asp-139, Asp-165, and Asn-166.

It belongs to the class I-like SAM-binding methyltransferase superfamily. Cation-dependent O-methyltransferase family. In terms of assembly, homodimer. Requires Mg(2+) as cofactor.

It catalyses the reaction a catechol + S-adenosyl-L-methionine = a guaiacol + S-adenosyl-L-homocysteine + H(+). Its activity is regulated as follows. The metal ion affects the meta and para-regiospecificity of the enzyme as well as the enzyme activity and thermal stability. In terms of biological role, catechol O-methyltransferase that can use various catechol-like compounds. Can produce vanillic acid (meta-form) and iso-vanillic acid (para-form) from protocatechuic acid (PCA). Does not have a regiospecificity, and produces the meta- and para-forms of the products in equal proportion. The protein is Catechol O-methyltransferase of Niastella koreensis (strain DSM 17620 / KACC 11465 / NBRC 106392 / GR20-10).